Consider the following 488-residue polypeptide: Glutamyl-tRNA(Gln) amidotransferase subunit A (488 aa).

Active-site charge relay system residues include K77 and S152. Residue S176 is the Acyl-ester intermediate of the active site.

It belongs to the amidase family. GatA subfamily. As to quaternary structure, heterotrimer of A, B and C subunits.

It carries out the reaction L-glutamyl-tRNA(Gln) + L-glutamine + ATP + H2O = L-glutaminyl-tRNA(Gln) + L-glutamate + ADP + phosphate + H(+). In terms of biological role, allows the formation of correctly charged Gln-tRNA(Gln) through the transamidation of misacylated Glu-tRNA(Gln) in organisms which lack glutaminyl-tRNA synthetase. The reaction takes place in the presence of glutamine and ATP through an activated gamma-phospho-Glu-tRNA(Gln). The polypeptide is Glutamyl-tRNA(Gln) amidotransferase subunit A (Streptococcus suis (strain 05ZYH33)).